The sequence spans 113 residues: Gamma-glutamylcyclotransferase family protein YtfP (113 aa).

Belongs to the gamma-glutamylcyclotransferase family.

The protein is Gamma-glutamylcyclotransferase family protein YtfP (ytfP) of Escherichia coli O157:H7.